Here is a 417-residue protein sequence, read N- to C-terminus: Acid phosphatase (417 aa).

The signal sequence occupies residues 1 to 19; sequence MFTKQSLVTLLGGLSLAVA. Residues Asn-122, Asn-187, and Asn-209 are each glycosylated (N-linked (GlcNAc...) asparagine). Asp-216 serves as the catalytic Proton donor. N-linked (GlcNAc...) asparagine glycans are attached at residues Asn-218, Asn-333, and Asn-383.

Post-translationally, the N-terminus is blocked.

The protein localises to the secreted. It carries out the reaction a phosphate monoester + H2O = an alcohol + phosphate. This is Acid phosphatase (phoA) from Aspergillus niger.